Reading from the N-terminus, the 100-residue chain is NADH-quinone oxidoreductase subunit K (100 aa).

Transmembrane regions (helical) follow at residues 4–24 (TSYY…GVLL), 29–49 (IVIF…LVAF), and 61–81 (IVFF…ALLV).

The protein belongs to the complex I subunit 4L family. As to quaternary structure, NDH-1 is composed of 14 different subunits. Subunits NuoA, H, J, K, L, M, N constitute the membrane sector of the complex.

Its subcellular location is the cell membrane. The enzyme catalyses a quinone + NADH + 5 H(+)(in) = a quinol + NAD(+) + 4 H(+)(out). In terms of biological role, NDH-1 shuttles electrons from NADH, via FMN and iron-sulfur (Fe-S) centers, to quinones in the respiratory chain. The immediate electron acceptor for the enzyme in this species is believed to be ubiquinone. Couples the redox reaction to proton translocation (for every two electrons transferred, four hydrogen ions are translocated across the cytoplasmic membrane), and thus conserves the redox energy in a proton gradient. The chain is NADH-quinone oxidoreductase subunit K from Chloroflexus aggregans (strain MD-66 / DSM 9485).